The sequence spans 224 residues: DNA repair and recombination protein RadB (224 aa).

It belongs to the eukaryotic RecA-like protein family. RadB subfamily.

In terms of biological role, involved in DNA repair and in homologous recombination. May regulate the cleavage reactions of the branch-structured DNA. Has a very weak ATPase activity that is not stimulated by DNA. Binds DNA but does not promote DNA strands exchange. The protein is DNA repair and recombination protein RadB of Thermococcus onnurineus (strain NA1).